The primary structure comprises 943 residues: Sodium- and chloride-dependent GABA transporter ine (943 aa).

Over 1–345 the chain is Cytoplasmic; it reads MAENKDVSQV…RQQHWANKMQ (345 aa). A disordered region spans residues 103–122; it reads HKQSPLRHTSVRTRPSSEVL. 3 helical membrane passes run 346–366, 373–393, and 418–438; these read FVLA…FPYM, GVFL…LLFM, and GAGL…SVII. Topologically, residues 439–510 are extracellular; it reads GYSIYYFFTS…GLEYPGMMRW (72 aa). A glycan (N-linked (GlcNAc...) asparagine) is linked at N476. Helical transmembrane passes span 511–531, 539–559, 591–607, 618–638, 679–699, 723–743, 754–774, 799–819, and 836–856; these read ELFA…WKSI, YFTA…AVTL, FNSL…FASY, TVAV…FAFS, WAVM…FAIV, IVVL…IIQG, YAAS…IAWF, CWLV…LINY, and YGIG…YAVI. The Cytoplasmic portion of the chain corresponds to 857-943; sequence NFLRSSGDTF…HAEAGGPCGQ (87 aa).

This sequence belongs to the sodium:neurotransmitter symporter (SNF) (TC 2.A.22) family. In terms of tissue distribution, expressed both maternally and zygotically. Developing embryos exhibit expression in the posterior hindgut, foregut, midgut, Malpighian tubules, anal plate, Garland cells, and a subset of cells in the central nervous system. Central nervous system expression is seen in segmentally repeating in cells flanking the midline of the ventral ganglion. Isoform A and isoform B are colocalized in both the nervous system and the fluid reabsorption system.

It is found in the membrane. Plays a role in neuronal membrane excitation, important for normal response properties of the photoreceptor. Able to control excitability from either neurons or glia cells. Ine negatively regulates neuronal sodium channels. Controls neurotransmitter-mediated signaling pathways associated with the structure of the larval peripheral nerve, ine and eag control perineurial glial growth through partially redundant pathways. Isoform A and isoform B are both functional, although isoform A functions with greater efficiency. Has a role in osmolyte transport within the Malpighian tubule and hindgut. The polypeptide is Sodium- and chloride-dependent GABA transporter ine (Drosophila melanogaster (Fruit fly)).